A 118-amino-acid polypeptide reads, in one-letter code: T cell receptor gamma variable 3 (118 aa).

Residues 1–17 form the signal peptide; sequence MRWALLVLLAFLSPASQ. Residues 18 to 118 enclose the Ig-like domain; the sequence is KSSNLEGRTK…GVYYCATWDR (101 aa). C41 and C113 form a disulfide bridge. N106 carries an N-linked (GlcNAc...) asparagine glycan.

As to quaternary structure, gamma-delta TR is a heterodimer composed of a gamma and delta chain; disulfide-linked. The gamma-delta TR is associated with the transmembrane signaling CD3 coreceptor proteins following the stoichiometry: a single gamma-delta TR heterodimer associates with one CD3D-CD3E heterodimer, one CD3G-CD3E heterodimer and one CD247 homodimer forming a stable octameric structure. Upon activation, gamma-delta TR complex associates with FCER1G to initiate intracellular signaling.

It is found in the cell membrane. In terms of biological role, v region of the variable domain of T cell receptor (TR) gamma chain that participates in the antigen recognition. Gamma-delta TRs recognize a variety of self and foreign non-peptide antigens frequently expressed at the epithelial boundaries between the host and external environment, including endogenous lipids presented by MH-like protein CD1D and phosphoantigens presented by butyrophilin-like molecule BTN3A1. Upon antigen recognition induces rapid, innate-like immune responses involved in pathogen clearance and tissue repair. Binding of gamma-delta TR complex to antigen triggers phosphorylation of immunoreceptor tyrosine-based activation motifs (ITAMs) in the CD3 chains by the LCK and FYN kinases, allowing the recruitment, phosphorylation, and activation of ZAP70 that facilitates phosphorylation of the scaffolding proteins LCP2 and LAT. This lead to the formation of a supramolecular signalosome that recruits the phospholipase PLCG1, resulting in calcium mobilization and ERK activation, ultimately leading to T cell expansion and differentiation into effector cells. Gamma-delta TRs are produced through somatic rearrangement of a limited repertoire of variable (V), diversity (D), and joining (J) genes. The potential diversity of gamma-delta TRs is conferred by the unique ability to rearrange (D) genes in tandem and to utilize all three reading frames. The combinatorial diversity is considerably increased by the sequence exonuclease trimming and random nucleotide (N) region additions which occur during the V-(D)-J rearrangements. The sequence is that of T cell receptor gamma variable 3 from Homo sapiens (Human).